The chain runs to 252 residues: MKVDLNCDLGEAFGNYSFGGDNQIIPLITSANIACGFHAGDQHVMNDTIKLAKDNGIGIGAHPGLPDLQGFGRRNMDLSPEEVYDIVVYQLGALNGFCRIHDVKINHVKPHGALYQMGARDKVIAHAIAKAVYDFDPTLIYVGLSNTLLISEAQALGLSTASEVFADRRYEDDGQLVSRKEADALITNTDEAIKQVINMVKFQKVITKNNNTIDIKADTICVHGDGAHAIEFVTQIREQLTKEGISITRLGG.

This sequence belongs to the LamB/PxpA family. Forms a complex composed of PxpA, PxpB and PxpC.

It carries out the reaction 5-oxo-L-proline + ATP + 2 H2O = L-glutamate + ADP + phosphate + H(+). Catalyzes the cleavage of 5-oxoproline to form L-glutamate coupled to the hydrolysis of ATP to ADP and inorganic phosphate. The polypeptide is 5-oxoprolinase subunit A (Staphylococcus saprophyticus subsp. saprophyticus (strain ATCC 15305 / DSM 20229 / NCIMB 8711 / NCTC 7292 / S-41)).